Consider the following 161-residue polypeptide: Anaerobic nitrite reductase HB2 (161 aa).

Residues 5 to 154 (VFTEKQEALV…LALAIKAEMK (150 aa)) form the Globin domain. The Homodimerization motif lies at 38–42 (EIAPA). Heme b contacts are provided by S48, K62, H66, and H101. The Homodimerization motif lies at 108 to 120 (DPHFEVVKEALVR).

It belongs to the plant globin family. Homodimer. Heme b serves as cofactor.

It is found in the cytoplasm. It localises to the nucleus. It carries out the reaction Fe(III)-heme b-[protein] + nitric oxide + H2O = Fe(II)-heme b-[protein] + nitrite + 2 H(+). Its function is as follows. Phytoglobin that reduces nitrite to nitric oxide (NO) under anoxic conditions (e.g. during flooding or in waterlogged soil). May not function as an oxygen storage or transport protein. Has an unusually high affinity for O(2) through an hexacoordinate heme iron because of a very low dissociation constant. The sequence is that of Anaerobic nitrite reductase HB2 from Brassica napus (Rape).